Here is a 28-residue protein sequence, read N- to C-terminus: Cruzioseptin-3 (28 aa).

Q25 carries the glutamine amide modification. The propeptide occupies 27 to 28 (EQ).

In terms of tissue distribution, expressed by the skin glands.

It is found in the secreted. Functionally, has antimicrobial activity against Gram-negative bacterium E.coli (MIC=13.32 uM), against Gram-positive bacterium S.aureus (MIC=13.32 uM) and against fungus C.albicans (MIC=13.32 uM). At higher concentrations also has a bactericidal and fungicidal effect. Has hemagglutinating activity against horse erythrocytes. In Cruziohyla calcarifer (Splendid leaf frog), this protein is Cruzioseptin-3.